Reading from the N-terminus, the 1107-residue chain is Polyphosphatidylinositol phosphatase INP53 (1107 aa).

The SAC domain maps to 142–482 (LKKLLSNGSF…GDQISQIYTG (341 aa)). Ser-497 carries the post-translational modification Phosphoserine. Residues 926–1107 (TASSVASSSP…LDSWQPLTPK (182 aa)) form a disordered region. Low complexity predominate over residues 927–942 (ASSVASSSPVSSASAS). Positions 943-956 (LQPVRTQNSSQSRT) are enriched in polar residues. At Ser-986 the chain carries Phosphoserine. Polar residues-rich tracts occupy residues 987–1005 (PTPQ…NIQE), 1020–1038 (FSQN…SPMS), 1045–1063 (NSAS…QTPT), and 1097–1107 (TLDSWQPLTPK). Ser-1035 carries the phosphoserine modification. Position 1105 is a phosphothreonine (Thr-1105).

This sequence belongs to the synaptojanin family. The protein in the central section; belongs to the inositol 1,4,5-trisphosphate 5-phosphatase family. In terms of assembly, interacts (via SAC domain) with BSP1; the interaction is direct. Interacts with CHC1.

It localises to the cytoplasm. It catalyses the reaction a 1,2-diacyl-sn-glycero-3-phospho-(1D-myo-inositol-4,5-bisphosphate) + H2O = a 1,2-diacyl-sn-glycero-3-phospho-(1D-myo-inositol 4-phosphate) + phosphate. Dephosphorylates a number of phosphatidylinositols (PIs) like phosphatidylinositol 4,5-bisphosphate (PtdIns(4,5)P2), but also phosphatidylinositol 3-phosphate (PtdIns(3)P), phosphatidylinositol 4-phosphate (PtdIns(4)P), and phosphatidylinositol 3,5-bisphosphate (PtdIns(3,5)P2). Controls the cellular levels and subcellular distribution of phosphatidylinositol 3-phosphate and phosphatidylinositol 4,5-bisphosphate. Plays an essential role in a TGN (trans Golgi network)-to-early endosome pathway. Involved in clathrin-mediated protein sorting at the TGN. This Saccharomyces cerevisiae (strain ATCC 204508 / S288c) (Baker's yeast) protein is Polyphosphatidylinositol phosphatase INP53 (INP53).